Reading from the N-terminus, the 272-residue chain is Shikimate dehydrogenase (NADP(+)) (272 aa).

Shikimate-binding positions include 14 to 16 and T61; that span reads SRS. Residue K65 is the Proton acceptor of the active site. E77 is a binding site for NADP(+). Shikimate-binding residues include N86 and D102. NADP(+)-binding positions include 126–130, 149–154, and M213; these read GVGGA and NRTFPR. Y215 contributes to the shikimate binding site. G237 provides a ligand contact to NADP(+).

The protein belongs to the shikimate dehydrogenase family. As to quaternary structure, homodimer.

It catalyses the reaction shikimate + NADP(+) = 3-dehydroshikimate + NADPH + H(+). It functions in the pathway metabolic intermediate biosynthesis; chorismate biosynthesis; chorismate from D-erythrose 4-phosphate and phosphoenolpyruvate: step 4/7. In terms of biological role, involved in the biosynthesis of the chorismate, which leads to the biosynthesis of aromatic amino acids. Catalyzes the reversible NADPH linked reduction of 3-dehydroshikimate (DHSA) to yield shikimate (SA). The sequence is that of Shikimate dehydrogenase (NADP(+)) from Sodalis glossinidius (strain morsitans).